The sequence spans 514 residues: ATP synthase subunit alpha (514 aa).

170–177 contacts ATP; it reads GDRQIGKT.

Belongs to the ATPase alpha/beta chains family. F-type ATPases have 2 components, CF(1) - the catalytic core - and CF(0) - the membrane proton channel. CF(1) has five subunits: alpha(3), beta(3), gamma(1), delta(1), epsilon(1). CF(0) has three main subunits: a(1), b(2) and c(9-12). The alpha and beta chains form an alternating ring which encloses part of the gamma chain. CF(1) is attached to CF(0) by a central stalk formed by the gamma and epsilon chains, while a peripheral stalk is formed by the delta and b chains.

The protein localises to the cell inner membrane. The enzyme catalyses ATP + H2O + 4 H(+)(in) = ADP + phosphate + 5 H(+)(out). In terms of biological role, produces ATP from ADP in the presence of a proton gradient across the membrane. The alpha chain is a regulatory subunit. This is ATP synthase subunit alpha from Ectopseudomonas mendocina (strain ymp) (Pseudomonas mendocina).